The following is a 163-amino-acid chain: Putative 4-hydroxy-4-methyl-2-oxoglutarate aldolase (163 aa).

Substrate contacts are provided by residues 76-79 (GDMI) and arginine 98. Aspartate 99 contributes to the a divalent metal cation binding site.

Belongs to the class II aldolase/RraA-like family. As to quaternary structure, homotrimer. The cofactor is a divalent metal cation.

The enzyme catalyses 4-hydroxy-4-methyl-2-oxoglutarate = 2 pyruvate. The catalysed reaction is oxaloacetate + H(+) = pyruvate + CO2. In terms of biological role, catalyzes the aldol cleavage of 4-hydroxy-4-methyl-2-oxoglutarate (HMG) into 2 molecules of pyruvate. Also contains a secondary oxaloacetate (OAA) decarboxylase activity due to the common pyruvate enolate transition state formed following C-C bond cleavage in the retro-aldol and decarboxylation reactions. This chain is Putative 4-hydroxy-4-methyl-2-oxoglutarate aldolase, found in Pseudomonas fluorescens.